A 324-amino-acid chain; its full sequence is Phospho-N-acetylmuramoyl-pentapeptide-transferase (324 aa).

A run of 10 helical transmembrane segments spans residues 5-25 (AIVI…PLFI), 57-77 (IMIL…IAGL), 81-101 (TYLL…DDMI), 117-137 (FIGQ…SGFS), 147-167 (WSVD…VGGS), 176-196 (LDGL…VLAW), 203-223 (VAVF…FNAH), 227-247 (VFMG…VAVL), 250-270 (LELL…SVII), and 302-322 (IVVT…YIEV).

The protein belongs to the glycosyltransferase 4 family. MraY subfamily. The cofactor is Mg(2+).

The protein localises to the cell membrane. The catalysed reaction is UDP-N-acetyl-alpha-D-muramoyl-L-alanyl-gamma-D-glutamyl-meso-2,6-diaminopimeloyl-D-alanyl-D-alanine + di-trans,octa-cis-undecaprenyl phosphate = di-trans,octa-cis-undecaprenyl diphospho-N-acetyl-alpha-D-muramoyl-L-alanyl-D-glutamyl-meso-2,6-diaminopimeloyl-D-alanyl-D-alanine + UMP. It participates in cell wall biogenesis; peptidoglycan biosynthesis. Functionally, catalyzes the initial step of the lipid cycle reactions in the biosynthesis of the cell wall peptidoglycan: transfers peptidoglycan precursor phospho-MurNAc-pentapeptide from UDP-MurNAc-pentapeptide onto the lipid carrier undecaprenyl phosphate, yielding undecaprenyl-pyrophosphoryl-MurNAc-pentapeptide, known as lipid I. The protein is Phospho-N-acetylmuramoyl-pentapeptide-transferase of Geobacillus kaustophilus (strain HTA426).